The primary structure comprises 1698 residues: Bromodomain adjacent to zinc finger domain protein 2A (1698 aa).

2 disordered regions span residues 240 to 262 (QSTP…QLPS) and 352 to 387 (VMQE…MTIE). The span at 377–387 (ENVSQDEMTIE) shows a compositional bias: polar residues. The MBD domain occupies 418–489 (IATPEQVCFP…EHFSFSPRMP (72 aa)). 2 disordered regions span residues 524–550 (RGRP…PPKV) and 610–653 (EKEE…DRKL). A compositionally biased stretch (basic and acidic residues) spans 528 to 540 (RNLEKAKAKEQKA). Residues 541–553 (KRGRGRPPKVKMI) constitute a DNA-binding region (a.T hook 1). Residues 579–638 (VQLCKLKKKMRRKARNQEAKLEAAKKLKEIKEKEEKKQKIQKAKNQEKAKNQEKKRTRRQ) adopt a coiled-coil conformation. Basic and acidic residues predominate over residues 610-632 (EKEEKKQKIQKAKNQEKAKNQEK). One can recognise a DDT domain in the interval 701 to 766 (SCAFSDCLTT…LQAAMINPGL (66 aa)). Disordered stretches follow at residues 884 to 905 (ITTT…NDEL), 1013 to 1063 (SFGS…PLTN), 1088 to 1110 (TVLT…SEAT), and 1123 to 1149 (TPCR…TAAT). Over residues 890 to 900 (SLRRRSERNAE) the composition is skewed to basic and acidic residues. Composition is skewed to polar residues over residues 1023-1040 (HPRN…SCHC) and 1051-1063 (VTDQ…PLTN). Low complexity predominate over residues 1091–1108 (TPESSPPHSESTPIISSE). The segment covering 1124-1149 (PCRNHNQGLSTHSSNRLSPPSPTAAT) has biased composition (polar residues). Positions 1204 to 1216 (EKRRGRRPSKLLK) form a DNA-binding region, a.T hook 3. Residues 1476-1526 (KVTCLYCRKGDNDELLLLCDSCDRGCHTYCHRPRMNEIPEGDWFCPTCISL) form a PHD-type zinc finger. The tract at residues 1549 to 1587 (FTEDSPSKPSRRREHPTASQFSPGESPASKKRRMGTRSQ) is disordered. The Bromo domain occupies 1585–1689 (RSQSPDLTFC…KFYDARWEEF (105 aa)).

This sequence belongs to the WAL family. Component of the NoRC complex, at least composed of SMARCA5/SNF2H and BAZ2A/TIP5.

It localises to the nucleus. The protein localises to the nucleolus. In terms of biological role, essential component of the NoRC (nucleolar remodeling complex) complex, a complex that mediates silencing of a fraction of rDNA by recruiting histone-modifying enzymes and DNA methyltransferases, leading to heterochromatin formation and transcriptional silencing. In the complex, it plays a central role by being recruited to rDNA and by targeting chromatin modifying enzymes such as HDAC1, leading to repress RNA polymerase I transcription. Recruited to rDNA via its interaction with TTF1 and its ability to recognize and bind histone H4 acetylated on 'Lys-16' (H4K16ac), leading to deacetylation of H4K5ac, H4K8ac, H4K12ac but not H4K16ac. Specifically binds pRNAs, 150-250 nucleotide RNAs that are complementary in sequence to the rDNA promoter; pRNA-binding is required for heterochromatin formation and rDNA silencing. The protein is Bromodomain adjacent to zinc finger domain protein 2A (baz2a) of Xenopus laevis (African clawed frog).